The sequence spans 156 residues: Large ribosomal subunit protein uL15 (156 aa).

A compositionally biased stretch (basic and acidic residues) spans 1-13 (MKLNEIKDNEGAT). The disordered stretch occupies residues 1-41 (MKLNEIKDNEGATKNRKRLGRGIGSGSGKTAGRGVKGQKAR). Residues 21–35 (RGIGSGSGKTAGRGV) show a composition bias toward gly residues.

This sequence belongs to the universal ribosomal protein uL15 family. In terms of assembly, part of the 50S ribosomal subunit.

Binds to the 23S rRNA. The sequence is that of Large ribosomal subunit protein uL15 from Sinorhizobium medicae (strain WSM419) (Ensifer medicae).